The primary structure comprises 229 residues: DNA repair protein RecO (229 aa).

This sequence belongs to the RecO family.

Functionally, involved in DNA repair and RecF pathway recombination. In Legionella pneumophila (strain Paris), this protein is DNA repair protein RecO.